The primary structure comprises 298 residues: HTH-type transcriptional regulator ArgP (298 aa).

In terms of domain architecture, HTH lysR-type spans 4 to 60 (LDYRWIEALDSVVSKGSFERAAEQLFISQSAVSQRIKQLEKYLAQPVLIREQPPRPT). The segment at residues 21 to 40 (FERAAEQLFISQSAVSQRIK) is a DNA-binding region (H-T-H motif).

Belongs to the LysR transcriptional regulatory family. As to quaternary structure, homodimer.

Functionally, controls the transcription of genes involved in arginine and lysine metabolism. The protein is HTH-type transcriptional regulator ArgP of Vibrio cholerae serotype O1 (strain ATCC 39315 / El Tor Inaba N16961).